The sequence spans 290 residues: Diaminopimelate epimerase (290 aa).

Positions 17, 49, and 69 each coordinate substrate. Cysteine 78 acts as the Proton donor in catalysis. Substrate is bound by residues 79 to 80 (GN), asparagine 165, asparagine 198, and 216 to 217 (ER). Catalysis depends on cysteine 225, which acts as the Proton acceptor. Residue 226-227 (GS) participates in substrate binding.

Belongs to the diaminopimelate epimerase family. In terms of assembly, homodimer.

Its subcellular location is the cytoplasm. The enzyme catalyses (2S,6S)-2,6-diaminopimelate = meso-2,6-diaminopimelate. The protein operates within amino-acid biosynthesis; L-lysine biosynthesis via DAP pathway; DL-2,6-diaminopimelate from LL-2,6-diaminopimelate: step 1/1. In terms of biological role, catalyzes the stereoinversion of LL-2,6-diaminopimelate (L,L-DAP) to meso-diaminopimelate (meso-DAP), a precursor of L-lysine and an essential component of the bacterial peptidoglycan. In Methylocella silvestris (strain DSM 15510 / CIP 108128 / LMG 27833 / NCIMB 13906 / BL2), this protein is Diaminopimelate epimerase.